The primary structure comprises 544 residues: Chaperonin GroEL (544 aa).

ATP is bound by residues 30–33, K51, 87–91, G415, and D495; these read TLGP and DGTTT.

Belongs to the chaperonin (HSP60) family. Forms a cylinder of 14 subunits composed of two heptameric rings stacked back-to-back. Interacts with the co-chaperonin GroES.

The protein localises to the cytoplasm. It carries out the reaction ATP + H2O + a folded polypeptide = ADP + phosphate + an unfolded polypeptide.. Its function is as follows. Together with its co-chaperonin GroES, plays an essential role in assisting protein folding. The GroEL-GroES system forms a nano-cage that allows encapsulation of the non-native substrate proteins and provides a physical environment optimized to promote and accelerate protein folding. This chain is Chaperonin GroEL, found in Neisseria meningitidis serogroup C (strain 053442).